The chain runs to 393 residues: Pyrimidine monooxygenase RutA (393 aa).

FMN-binding positions include I79–K80, N145, E154, R170–Y171, and S220.

This sequence belongs to the NtaA/SnaA/DszA monooxygenase family. RutA subfamily.

The enzyme catalyses uracil + FMNH2 + NADH + O2 = (Z)-3-ureidoacrylate + FMN + NAD(+) + H2O + H(+). The catalysed reaction is thymine + FMNH2 + NADH + O2 = (Z)-2-methylureidoacrylate + FMN + NAD(+) + H2O + H(+). Its function is as follows. Catalyzes the pyrimidine ring opening between N-3 and C-4 by an unusual flavin hydroperoxide-catalyzed mechanism, adding oxygen atoms in the process to yield ureidoacrylate peracid, that immediately reacts with FMN forming ureidoacrylate and FMN-N(5)-oxide. The FMN-N(5)-oxide reacts spontaneously with NADH to produce FMN. Requires the flavin reductase RutF to regenerate FMN in vivo. This is Pyrimidine monooxygenase RutA from Escherichia coli O9:H4 (strain HS).